Reading from the N-terminus, the 522-residue chain is Anti-sigma-I factor RsgI4 (522 aa).

Residues methionine 1–asparagine 51 lie on the Cytoplasmic side of the membrane. Residues asparagine 2–asparagine 49 form the RsgI N-terminal anti-sigma domain. The helical transmembrane segment at glycine 52–phenylalanine 72 threads the bilayer. Topologically, residues threonine 73–proline 522 are extracellular. Over residues serine 311–proline 361 the composition is skewed to low complexity. The segment at serine 311 to glycine 371 is disordered. The region spanning glycine 371–proline 522 is the CBM3 domain.

In terms of assembly, interacts (via RsgI N-terminal anti-sigma domain) with SigI4.

It localises to the cell membrane. Its function is as follows. Anti-sigma factor for SigI4. Negatively regulates SigI4 activity through direct interaction. Binding of the polysaccharide substrate to the extracellular C-terminal sensing domain of RsgI4 may induce a conformational change in its N-terminal cytoplasmic region, leading to the release and activation of SigI4. The sequence is that of Anti-sigma-I factor RsgI4 from Acetivibrio thermocellus (strain ATCC 27405 / DSM 1237 / JCM 9322 / NBRC 103400 / NCIMB 10682 / NRRL B-4536 / VPI 7372) (Clostridium thermocellum).